The primary structure comprises 240 residues: 2,3,4,5-tetrahydropyridine-2,6-dicarboxylate N-acetyltransferase (240 aa).

The protein belongs to the transferase hexapeptide repeat family. DapH subfamily.

The catalysed reaction is (S)-2,3,4,5-tetrahydrodipicolinate + acetyl-CoA + H2O = L-2-acetamido-6-oxoheptanedioate + CoA. The protein operates within amino-acid biosynthesis; L-lysine biosynthesis via DAP pathway; LL-2,6-diaminopimelate from (S)-tetrahydrodipicolinate (acetylase route): step 1/3. Catalyzes the transfer of an acetyl group from acetyl-CoA to tetrahydrodipicolinate. The chain is 2,3,4,5-tetrahydropyridine-2,6-dicarboxylate N-acetyltransferase from Bacillus anthracis (strain A0248).